Here is a 979-residue protein sequence, read N- to C-terminus: DNA ligase 4 (979 aa).

The interval 1-39 is disordered; that stretch reads MDSDEIMPDEEHPNVPVGDEESDIDEKYPNRPRNHSPTL. The ATP site is built by E320, K322, L323, R327, E389, F430, E490, K495, K512, and K514. The N6-AMP-lysine intermediate role is filled by K322. E389 is a Mg(2+) binding site. E490 is a Mg(2+) binding site. BRCT domains follow at residues 721–814 and 867–965; these read PSGH…PDFL and LQES…RFQP.

The protein belongs to the ATP-dependent DNA ligase family. Mg(2+) serves as cofactor.

The protein localises to the nucleus. It carries out the reaction ATP + (deoxyribonucleotide)n-3'-hydroxyl + 5'-phospho-(deoxyribonucleotide)m = (deoxyribonucleotide)n+m + AMP + diphosphate.. In terms of biological role, DNA ligase involved in DNA non-homologous end joining (NHEJ); required for double-strand break (DSB) repair. The sequence is that of DNA ligase 4 (lig4) from Aspergillus fumigatus (strain ATCC MYA-4609 / CBS 101355 / FGSC A1100 / Af293) (Neosartorya fumigata).